Reading from the N-terminus, the 399-residue chain is Serpin-Z4 (399 aa).

The segment at 36-56 (GNVAFSPLSLHVALSLITAGA) is signal for targeting protein Z4 into the ER lumen. The segment at 343-367 (GTEAGAATVAMGVAMSMPLKVDLVD) is RCL.

Belongs to the serpin family. In terms of tissue distribution, highly expressed in embryo and endosperm. Is accumulated and stored in the endosperm, where it exists in a free and a bound form. Expressed in roots, coleoptiles, shoots and leaves.

Its function is as follows. A major component of the endosperm albumin, this protein acts as a storage protein during grain filling, contributing a substantial part of the grain's lysine. May have an inhibitory function during filling or germination. Inhibits cathepsin G in vitro. The protein is Serpin-Z4 (PAZ1) of Hordeum vulgare (Barley).